Here is a 597-residue protein sequence, read N- to C-terminus: Aspartate--tRNA ligase (597 aa).

Glu171 provides a ligand contact to L-aspartate. The segment at Gln195–Lys198 is aspartate. Position 217 (Arg217) interacts with L-aspartate. ATP is bound by residues Arg217–Glu219 and Gln226. His448 lines the L-aspartate pocket. Position 482 (Glu482) interacts with ATP. Arg489 provides a ligand contact to L-aspartate. Gly534–Arg537 lines the ATP pocket.

Belongs to the class-II aminoacyl-tRNA synthetase family. Type 1 subfamily. In terms of assembly, homodimer.

It is found in the cytoplasm. It catalyses the reaction tRNA(Asp) + L-aspartate + ATP = L-aspartyl-tRNA(Asp) + AMP + diphosphate. Catalyzes the attachment of L-aspartate to tRNA(Asp) in a two-step reaction: L-aspartate is first activated by ATP to form Asp-AMP and then transferred to the acceptor end of tRNA(Asp). This Photobacterium profundum (strain SS9) protein is Aspartate--tRNA ligase.